Here is a 101-residue protein sequence, read N- to C-terminus: MGSRCAKLSTGHGPAQNTGHSRGHESSMKKLVACVSQDNFSLSSEGEEEEEDEEEEEEEEEEEEEEQIPVKGKLLLLEPEKQESAEDGEAQPSPEPKQTHS.

A disordered region spans residues 1–101; the sequence is MGSRCAKLST…PSPEPKQTHS (101 aa). The span at 45–67 shows a compositional bias: acidic residues; that stretch reads EGEEEEEDEEEEEEEEEEEEEEQ. A Phosphoserine modification is found at Ser-93.

Belongs to the protamine P3 family. Testis.

The protein resides in the nucleus. The protein localises to the chromosome. In terms of biological role, protamines substitute for histones in the chromatin of sperm during the haploid phase of spermatogenesis. They compact sperm DNA into a highly condensed, stable and inactive complex. This chain is Protamine-3 (Prm3), found in Mus musculus (Mouse).